The primary structure comprises 954 residues: Calsyntenin-1 (954 aa).

Residues 1–25 (MRIRGVKPFASAVGLLLGLLYAVDA) form the signal peptide. Residues 26-833 (AKVNKHKPWI…THQASVVPSA (808 aa)) lie on the Extracellular side of the membrane. Cadherin domains lie at 35–151 (IETT…SPVF) and 152–252 (KEKS…KPSW). 3 N-linked (GlcNAc...) asparagine glycosylation sites follow: Asn333, Asn353, and Asn552. The helical transmembrane segment at 834–854 (ATIVIVVCVSFLVFMIILGVF) threads the bilayer. At 855–954 (RIRAAHQRTM…LEWDDSTLTY (100 aa)) the chain is on the cytoplasmic side. The disordered stretch occupies residues 891–954 (TYEDQHSSEE…LEWDDSTLTY (64 aa)). Over residues 900–935 (EEGDEEEEESEDGEEEDDITSAESDSSEDEAGEQED) the composition is skewed to acidic residues.

This sequence belongs to the calsyntenin family. As to quaternary structure, homooligomer and heterooligomer; mediates both homophilic and heterophilc interactions with clstn2 and clstn3 paralogs via cadherin domains. As to expression, by 48 hours post-fertilization (hpf), widely expressed in the brain, with strong expression in the telencephalon and the midbrain.

The protein localises to the postsynaptic cell membrane. It localises to the endoplasmic reticulum membrane. It is found in the golgi apparatus membrane. The protein resides in the cell projection. Its subcellular location is the neuron projection. Its function is as follows. Postsynaptic adhesion molecule involved in vesicle trafficking; required for branching of peripheral but not central axons of sensory neurons. Promotes synapse development by acting as a cell adhesion molecule at the postsynaptic membrane, which associates with presynaptic neurexins. The chain is Calsyntenin-1 from Danio rerio (Zebrafish).